Reading from the N-terminus, the 127-residue chain is Small ribosomal subunit protein bS16 (127 aa).

The tract at residues 80–127 is disordered; the sequence is GLKKRPTRNNPHKGEPGKKAQERIAAAKQAAEEAAAAKTESAPISEEV. Residues 81–90 are compositionally biased toward basic residues; it reads LKKRPTRNNP. Positions 91 to 101 are enriched in basic and acidic residues; it reads HKGEPGKKAQE. The span at 102–121 shows a compositional bias: low complexity; the sequence is RIAAAKQAAEEAAAAKTESA.

The protein belongs to the bacterial ribosomal protein bS16 family.

The chain is Small ribosomal subunit protein bS16 from Bartonella henselae (strain ATCC 49882 / DSM 28221 / CCUG 30454 / Houston 1) (Rochalimaea henselae).